Reading from the N-terminus, the 1093-residue chain is MTDLSDVSRTAAAKPPAVPGRGPANKVRFVTAASLFDGHDASINIMRRILQSQGCEVIHLGHNRSVQEVVTAALQEDVQGIAISSYQGGHVEYFKYMIDLLREHGGEHIQVFGGGGGVIVPDEIRELQAYGVARIYSPEDGQRMGLAGMITDMAQRCDIDLTRYAPTTLDTVVAGDRRALAQLITALENGKADPELVSALHAQAKAAAVPVLGITGTGGAGKSSLTDELIRRFRLDQDDALSIAVISIDPSRRKSGGALLGDRIRMNAINHPNIFMRSLATREAGSEISQALPDVIAACKAARFDLVIVETSGIGQGDAAIVPHVDLSLYVMTPEFGAASQLEKIDMLDFADFVAINKFDRKGAQDAWRDVAKQVQRNREQWHSRAEDMPVYGTQASRFNDDGVTMLYQGLVGALGARGMSLKPGTLPNLEGRISTGQNVIVPPARSRYLAELADTVRAYHRRVVAQSKLARERQQLRAAHDMLQGAGHESAALETLASERDVSLGAVERKLLAMWPQMQQAYSGDEYVVKIRDKEIRTGLISTTLSGTKIRKVVLPRFEDEGEILKWLMRENVPGSFPYTAGVFAFKREGEDPTRMFAGEGDAFRTNRRFKLVSEGMEAKRLSTAFDSVTLYGEDPHERPDIYGKVGNSGVSIATLEDMKVLYDGFDLTNPSTSVSMTINGPAPTILAMFMNTAIDQQIDRFRADNGRDPTADEEAKIRAWVLQNVRGTVQADILKEDQGQNTCIFSTEFSLKVMGDIQEYFVHHQVRNFYSVSISGYHIAEAGANPISQLAFTLANGFTYVEAYLARGMHIDDFAPNLSFFFSNGMDPEYSVLGRVARRIWAVTMRDKYGANDRSQKLKYHIQTSGRSLHAQEIDFNDIRTTLQALIAIYDNCNSLHTNAYDEAITTPTAESVRRALAIQLIINREWGVAKCENPNQGSFLIEELTDLVEEAVLQEFERIAERGGVLGAMETGYQRGKIQEESLYYEQLKHDGTLPIIGVNTFRNPNGDPTPQTLELARSSEDEKQSQLHRLTEFHGAHQADAEAMLARLRQAVIDNRNVFAVLMDAVRVCSLGQITHALFEVGGQYRRNM.

The disordered stretch occupies residues 1 to 20; the sequence is MTDLSDVSRTAAAKPPAVPG. In terms of domain architecture, B12-binding spans 26 to 156; that stretch reads KVRFVTAASL…AGMITDMAQR (131 aa). Histidine 39 is an adenosylcob(III)alamin binding site. The tract at residues 169 to 417 is GTPase chaperone MeaI; that stretch reads LDTVVAGDRR…YQGLVGALGA (249 aa). Residue 219-224 coordinates GTP; sequence GAGKSS. Residues serine 223, isoleucine 248, aspartate 249, and aspartate 262 each contribute to the Mg(2+) site. GTP is bound at residue arginine 265. 2 residues coordinate Mg(2+): glutamate 310 and threonine 311. 357 to 360 provides a ligand contact to GTP; it reads NKFD. The interval 418-579 is linker; that stretch reads RGMSLKPGTL…MRENVPGSFP (162 aa). Phenylalanine 587, arginine 622, arginine 728, tyrosine 772, serine 821, arginine 856, and lysine 861 together coordinate substrate. 2 residues coordinate GTP: glutamate 973 and asparagine 1092.

This sequence belongs to the IcmF family. Homodimer. Requires adenosylcob(III)alamin as cofactor. It depends on Mg(2+) as a cofactor.

It catalyses the reaction 2-methylpropanoyl-CoA = butanoyl-CoA. The enzyme catalyses 3-methylbutanoyl-CoA = 2,2-dimethylpropanoyl-CoA. It carries out the reaction GTP + H2O = GDP + phosphate + H(+). Is prone to inactivation during catalytic turnover due to the occasional loss of the 5'-deoxyadenosine moiety and formation of the inactive cob(II)alamin cofactor in its active site. The GTPase activity of IcmF powers the ejection of the inactive cofactor and requires the presence of an acceptor protein, adenosyltransferase (ATR), for receiving it. ATR, in turn, catalyzes an adenosylation reaction converting cob(II)alamin in the presence of ATP and a reductant to the active AdoCbl cofactor. The repaired cofactor is then reloaded onto IcmF in a GTPase-gated step, regenerating active enzyme. The GTPase activity of IcmF is significantly decreased in the presence of excess of AdoCbl or cob(II)alamin and is higher in the apoenzyme state, indicating that the G-domain senses the presence and identity of the cofactor in the mutase active site. Catalyzes the reversible interconversion of isobutyryl-CoA and n-butyryl-CoA, and to a much lesser extent, of pivalyl-CoA and isovaleryl-CoA, using radical chemistry. Also exhibits GTPase activity, associated with its G-protein domain (MeaI) that functions as a chaperone that assists cofactor delivery and proper holo-enzyme assembly. The G-domain of IcmF also has a role in its cofactor repair. Does not display ATPase activity. In Cupriavidus metallidurans (strain ATCC 43123 / DSM 2839 / NBRC 102507 / CH34) (Ralstonia metallidurans), this protein is Fused isobutyryl-CoA mutase.